The following is a 170-amino-acid chain: Phosphopantetheine adenylyltransferase (170 aa).

Thr14 contributes to the substrate binding site. Residues Thr14–Phe15 and His22 contribute to the ATP site. Lys46, Leu78, and Arg92 together coordinate substrate. Residues Gly93–Arg95, Glu103, and Trp128–Thr134 contribute to the ATP site.

This sequence belongs to the bacterial CoaD family. In terms of assembly, homohexamer. Requires Mg(2+) as cofactor.

The protein localises to the cytoplasm. The enzyme catalyses (R)-4'-phosphopantetheine + ATP + H(+) = 3'-dephospho-CoA + diphosphate. The protein operates within cofactor biosynthesis; coenzyme A biosynthesis; CoA from (R)-pantothenate: step 4/5. Its function is as follows. Reversibly transfers an adenylyl group from ATP to 4'-phosphopantetheine, yielding dephospho-CoA (dPCoA) and pyrophosphate. The polypeptide is Phosphopantetheine adenylyltransferase (Oleidesulfovibrio alaskensis (strain ATCC BAA-1058 / DSM 17464 / G20) (Desulfovibrio alaskensis)).